The primary structure comprises 906 residues: Gamma-tubulin complex component 3 homolog (906 aa).

The span at 208-229 (GQQPSQQSTTTKGLPNTVSRNV) shows a compositional bias: polar residues. A disordered region spans residues 208-242 (GQQPSQQSTTTKGLPNTVSRNVPRTRREGDSSGSV).

The protein belongs to the TUBGCP family. Interacts with gamma-tubulin.

The protein localises to the cytoplasm. It is found in the cytoskeleton. The protein resides in the microtubule organizing center. It localises to the centrosome. Its function is as follows. Necessary for the recruitment of gamma-tubulin to the centrosome and for the formation of a functional centrosome. In Xenopus laevis (African clawed frog), this protein is Gamma-tubulin complex component 3 homolog (tubgcp3).